The following is a 193-amino-acid chain: ATP-dependent Clp protease proteolytic subunit 1 (193 aa).

S98 functions as the Nucleophile in the catalytic mechanism. H123 is an active-site residue.

The protein belongs to the peptidase S14 family. Fourteen ClpP subunits assemble into 2 heptameric rings which stack back to back to give a disk-like structure with a central cavity, resembling the structure of eukaryotic proteasomes.

Its subcellular location is the cytoplasm. It carries out the reaction Hydrolysis of proteins to small peptides in the presence of ATP and magnesium. alpha-casein is the usual test substrate. In the absence of ATP, only oligopeptides shorter than five residues are hydrolyzed (such as succinyl-Leu-Tyr-|-NHMec, and Leu-Tyr-Leu-|-Tyr-Trp, in which cleavage of the -Tyr-|-Leu- and -Tyr-|-Trp bonds also occurs).. In terms of biological role, cleaves peptides in various proteins in a process that requires ATP hydrolysis. Has a chymotrypsin-like activity. Plays a major role in the degradation of misfolded proteins. The sequence is that of ATP-dependent Clp protease proteolytic subunit 1 from Bacillus cereus (strain ATCC 10987 / NRS 248).